The primary structure comprises 406 residues: Cysteine desulfurase (406 aa).

K226 bears the N6-(pyridoxal phosphate)lysine mark. The active-site Cysteine persulfide intermediate is the C364.

It belongs to the class-V pyridoxal-phosphate-dependent aminotransferase family. Csd subfamily. As to quaternary structure, homodimer. Interacts with SufE and the SufBCD complex composed of SufB, SufC and SufD. The interaction with SufE is required to mediate the direct transfer of the sulfur atom from the S-sulfanylcysteine. Requires pyridoxal 5'-phosphate as cofactor.

It is found in the cytoplasm. The catalysed reaction is (sulfur carrier)-H + L-cysteine = (sulfur carrier)-SH + L-alanine. It catalyses the reaction L-selenocysteine + AH2 = hydrogenselenide + L-alanine + A + H(+). Its pathway is cofactor biosynthesis; iron-sulfur cluster biosynthesis. Functionally, cysteine desulfurases mobilize the sulfur from L-cysteine to yield L-alanine, an essential step in sulfur metabolism for biosynthesis of a variety of sulfur-containing biomolecules. Component of the suf operon, which is activated and required under specific conditions such as oxidative stress and iron limitation. Acts as a potent selenocysteine lyase in vitro, that mobilizes selenium from L-selenocysteine. Selenocysteine lyase activity is however unsure in vivo. This Escherichia coli O139:H28 (strain E24377A / ETEC) protein is Cysteine desulfurase.